Reading from the N-terminus, the 692-residue chain is Ribonuclease R (692 aa).

The RNB domain occupies 204–525 (RKDLRDLLCF…IVHRLLFHPL (322 aa)). The 86-residue stretch at 563 to 648 (KKFLDEQPAT…LTQAIEWTLI (86 aa)) folds into the S1 motif domain. Residues 651-692 (KERSSSKKKKAKAKSNATQVKKKSSSKKKKAVSKAKKNRGGK) are disordered. Residues 670 to 692 (VKKKSSSKKKKAVSKAKKNRGGK) show a composition bias toward basic residues.

It belongs to the RNR ribonuclease family. RNase R subfamily.

The protein resides in the cytoplasm. It catalyses the reaction Exonucleolytic cleavage in the 3'- to 5'-direction to yield nucleoside 5'-phosphates.. In terms of biological role, 3'-5' exoribonuclease that releases 5'-nucleoside monophosphates and is involved in maturation of structured RNAs. The chain is Ribonuclease R from Chlamydia muridarum (strain MoPn / Nigg).